A 114-amino-acid chain; its full sequence is MSALSLLILGLLTAVPPASCQQGLGNLQPWMQGLIAVAVFLVLVAIAFAVNHFWCQEEPEPAHMILTVGNKADGVLVGTDGRYSSMAASFRSSEHENAYENVPEEEGKVRSTPM.

At 1–28 (MSALSLLILGLLTAVPPASCQQGLGNLQ) the chain is on the extracellular side. The helical transmembrane segment at 29 to 51 (PWMQGLIAVAVFLVLVAIAFAVN) threads the bilayer. Residues 52–114 (HFWCQEEPEP…EEGKVRSTPM (63 aa)) lie on the Cytoplasmic side of the membrane. Position 85 is a phosphoserine (S85). The tract at residues 94 to 114 (EHENAYENVPEEEGKVRSTPM) is disordered. Positions 105-114 (EEGKVRSTPM) are enriched in basic and acidic residues.

Belongs to the PDZK1-interacting protein 1/SMIM24 family. As to quaternary structure, forms a heterodimer (via N-terminal transmembrane helix) with SLC5A2/SGLT2 (via TM13); this interaction enhances SLC5A2 transporter activity. Interacts with PDZK1.

Its subcellular location is the apical cell membrane. Its function is as follows. Auxiliary protein of electrogenic Na(+)-coupled sugar symporter SLC5A2/SGLT2 and SLC5A1/SGLT1. Essential for the transporter activity of SLC5A2/SGLT2 but not SLC5A1/SGLT1. This is PDZK1-interacting protein 1 from Homo sapiens (Human).